Here is a 529-residue protein sequence, read N- to C-terminus: Peptide chain release factor 3 (529 aa).

A tr-type G domain is found at 11 to 280 (AARRTFAIIS…GLVAWAPPPM (270 aa)). GTP is bound by residues 20-27 (SHPDAGKT), 88-92 (DTPGH), and 142-145 (NKVD).

This sequence belongs to the TRAFAC class translation factor GTPase superfamily. Classic translation factor GTPase family. PrfC subfamily.

The protein localises to the cytoplasm. Functionally, increases the formation of ribosomal termination complexes and stimulates activities of RF-1 and RF-2. It binds guanine nucleotides and has strong preference for UGA stop codons. It may interact directly with the ribosome. The stimulation of RF-1 and RF-2 is significantly reduced by GTP and GDP, but not by GMP. The sequence is that of Peptide chain release factor 3 from Sodalis glossinidius (strain morsitans).